Here is a 431-residue protein sequence, read N- to C-terminus: C2H2 type master regulator of conidiophore development brlA (431 aa).

3 disordered regions span residues 29–51 (MTSS…SHGS), 211–275 (TPQQ…SEEY), and 287–306 (IRTH…VRSN). Residues 30–48 (TSSFSPLESPTPTPTSLYS) show a composition bias toward low complexity. The segment covering 225-265 (PSSNYSDFPASLQTFKPHTPSTPVRSLSLGTPRSDTPQSRM) has biased composition (polar residues). The span at 287 to 302 (IRTHRQPSRKPSKKQL) shows a compositional bias: basic residues. C2H2-type zinc fingers lie at residues 321 to 345 (FKCK…MKSH) and 351 to 376 (HVCW…TKTH). The interval 390-412 (DETSPDYDPEFRGQLTPDGRPIY) is disordered.

The protein localises to the nucleus. BrlA, abaA and wetA are pivotal regulators of conidiophore development and conidium maturation. They act individually and together to regulate their own expression and that of numerous other sporulation-specific genes. Binds promoters of target genes at brlA response elements (BREs) containing the conserved sequence 5'-(C/A)(A/G)AGGG(G/A)-3'. Regulates the expression levels of seven secondary metabolism gene clusters including a down-regulated cluster putatively involved in the biosynthesis of the mycotoxins roquefortine C and meleagrin. Negatively regulates the expression of cellulase genes. The sequence is that of C2H2 type master regulator of conidiophore development brlA from Penicillium oxalicum (strain 114-2 / CGMCC 5302) (Penicillium decumbens).